The primary structure comprises 128 residues: Large ribosomal subunit protein uL22 (128 aa).

The protein belongs to the universal ribosomal protein uL22 family. In terms of assembly, part of the 50S ribosomal subunit.

Its function is as follows. This protein binds specifically to 23S rRNA; its binding is stimulated by other ribosomal proteins, e.g. L4, L17, and L20. It is important during the early stages of 50S assembly. It makes multiple contacts with different domains of the 23S rRNA in the assembled 50S subunit and ribosome. In terms of biological role, the globular domain of the protein is located near the polypeptide exit tunnel on the outside of the subunit, while an extended beta-hairpin is found that lines the wall of the exit tunnel in the center of the 70S ribosome. The chain is Large ribosomal subunit protein uL22 from Prochlorococcus marinus (strain AS9601).